Reading from the N-terminus, the 1058-residue chain is Translation initiation factor IF-2 (1058 aa).

A compositionally biased stretch (basic and acidic residues) spans 1 to 12; that stretch reads MNDTKTPGDKTL. The tract at residues 1–468 is disordered; sequence MNDTKTPGDK…MTGHRGMQES (468 aa). Positions 54 to 81 are enriched in low complexity; sequence APGEAGAPSGTPAAAPAATPAPAAAAPR. Residues 82–95 are compositionally biased toward pro residues; sequence PATPAPAAPRPAAP. The span at 96 to 108 shows a compositional bias: low complexity; it reads ATPAQPAAEAKAP. The segment covering 109–119 has biased composition (pro residues); the sequence is APAPTPAPAAP. Low complexity-rich tracts occupy residues 120 to 156 and 164 to 228; these read AAPV…VEVP and EPVA…QRPG. The span at 244-271 shows a compositional bias: gly residues; it reads RSGGPGSDRRGGPGGQNRPGQNRQGGSG. Residues 292 to 364 are compositionally biased toward basic and acidic residues; it reads ARVREVEERR…ARKRFGEETG (73 aa). Residues 368–396 show a composition bias toward low complexity; it reads GASAPSTSTARPLTPRPAGTTTTTGAPAA. Basic residues predominate over residues 452–461; the sequence is FRRRTQRMTG. The 171-residue stretch at 555–725 folds into the tr-type G domain; sequence PRPPVVTIMG…SLQSEVLDLK (171 aa). The interval 564 to 571 is G1; the sequence is GHVDHGKT. Residue 564-571 coordinates GTP; the sequence is GHVDHGKT. A G2 region spans residues 589–593; that stretch reads GITQH. Residues 611 to 614 are G3; that stretch reads DTPG. GTP is bound by residues 611 to 615 and 665 to 668; these read DTPGH and NKID. Positions 665–668 are G4; sequence NKID. Residues 701–703 form a G5 region; it reads SAT.

It belongs to the TRAFAC class translation factor GTPase superfamily. Classic translation factor GTPase family. IF-2 subfamily.

The protein resides in the cytoplasm. One of the essential components for the initiation of protein synthesis. Protects formylmethionyl-tRNA from spontaneous hydrolysis and promotes its binding to the 30S ribosomal subunits. Also involved in the hydrolysis of GTP during the formation of the 70S ribosomal complex. The polypeptide is Translation initiation factor IF-2 (Azorhizobium caulinodans (strain ATCC 43989 / DSM 5975 / JCM 20966 / LMG 6465 / NBRC 14845 / NCIMB 13405 / ORS 571)).